Here is a 910-residue protein sequence, read N- to C-terminus: Short transient receptor potential channel 3 (910 aa).

Residues 1–93 (MSTKVKKCRE…VRGPAFMFGA (93 aa)) are disordered. Residues 1-448 (MSTKVKKCRE…KILRSPFMKF (448 aa)) lie on the Cytoplasmic side of the membrane. Positions 19–29 (PEEEEDGEAEG) are enriched in acidic residues. A compositionally biased stretch (pro residues) spans 48-58 (PPCPRAPPSPG). A compositionally biased stretch (low complexity) spans 59–68 (PDASSEGSPS). ANK repeat units follow at residues 100 to 129 (AEEERFLDAAEYGNIPVVRKMLEESRTLNV), 135 to 164 (MGQNALQLAVGNEHLEVTELLLKKENLARI), 166 to 192 (DALLLAISKGYVRIVEAILGHPGFAAS), and 221 to 250 (PDITPIILAAHCHKYEVVHLLLLKGARIER). Glu147 contributes to the Ca(2+) binding site. The chain crosses the membrane as a helical span at residues 449 to 466 (VAHAASFIIFLGLLVFNA). Over 467–497 (SDRFEGITTLPNITVIDYPKQIFRVKTTQFT) the chain is Extracellular. Asn478 carries an N-linked (GlcNAc...) asparagine glycan. Residues 498 to 516 (WTEMLIMVWVLGMMWSECK) form a helical membrane-spanning segment. 3 residues coordinate Ca(2+): Glu514, Glu517, and Asn532. Residues 517–529 (ELWLEGPREYIVQ) lie on the Cytoplasmic side of the membrane. A helical membrane pass occupies residues 530-551 (LWNVLDFGMLSIFIAAFTARFL). The Extracellular portion of the chain corresponds to 552-595 (AFLQATKAQQYVDSHVQESDLSEVTLPPEVQYFTYARDKWLPSD). Residues 596-619 (PQIISEGLYAIAVVLSFSRIAYIL) traverse the membrane as a helical segment. Residues 620–638 (PANESFGPLQISLGRTVKD) lie on the Cytoplasmic side of the membrane. One copy of the ANK 5 repeat lies at 623 to 652 (ESFGPLQISLGRTVKDIFKFMVLFIMVFLA). Residues 639–662 (IFKFMVLFIMVFLAFMIGMFILYS) traverse the membrane as a helical segment. Residues 663–702 (YYLGAKVNPAFTTVEESFKTLFWSIFGLSEVTSVVLKYDH) are Extracellular-facing. Residues 703–728 (KFIENIGYVLYGIYNVTMVVVLLNML) form a helical membrane-spanning segment. Over 729–910 (IAMINSSYQE…KLNPSVLRCE (182 aa)) the chain is Cytoplasmic. Ca(2+) is bound by residues Glu860, Glu863, Glu865, and Asp872.

The protein belongs to the transient receptor (TC 1.A.4) family. STrpC subfamily. TRPC3 sub-subfamily. Homotetramer. Interacts with ITPR1, ITPR3, MX1 and RNF24. Interacts with JPH2; the interaction is involved in maintaining Ca(2+) homeostasis in skeletal muscle and is mediated by JPH2 'Ser-165' phosphorylation. As to expression, abundantly expressed in brain. Concentrated in cerebellar Purkinje cells and sparsely localized in cerebellar granule lyer, pontine nuclei and thalamus. Lower levels detected in other tissues.

Its subcellular location is the cell membrane. The enzyme catalyses Ca(2+)(in) = Ca(2+)(out). Activated by diacylglycerol (DAG) in a membrane-delimited fashion, independently of protein kinase C. Activated by inositol 1,4,5-triphosphate receptors (ITPR) with bound IP3. May be activated by internal calcium store depletion. Inhibited by intracellular Ca(2+). Its function is as follows. Forms a receptor-activated non-selective calcium permeant cation channel. May be operated by a phosphatidylinositol second messenger system activated by receptor tyrosine kinases or G-protein coupled receptors. The protein is Short transient receptor potential channel 3 (Trpc3) of Mus musculus (Mouse).